Reading from the N-terminus, the 148-residue chain is Aspartate carbamoyltransferase regulatory chain (148 aa).

Zn(2+)-binding residues include Cys106, Cys111, Cys134, and Cys137.

The protein belongs to the PyrI family. Contains catalytic and regulatory chains. The cofactor is Zn(2+).

Its function is as follows. Involved in allosteric regulation of aspartate carbamoyltransferase. In Methanococcus maripaludis (strain C7 / ATCC BAA-1331), this protein is Aspartate carbamoyltransferase regulatory chain.